The primary structure comprises 144 residues: Superoxide dismutase [Mn], mitochondrial (144 aa).

Residues His-10, His-58, and Asp-143 each contribute to the Mn(2+) site.

It belongs to the iron/manganese superoxide dismutase family. Homotetramer. It depends on Mn(2+) as a cofactor.

The protein localises to the mitochondrion matrix. The enzyme catalyses 2 superoxide + 2 H(+) = H2O2 + O2. Functionally, destroys superoxide anion radicals which are normally produced within the cells and which are toxic to biological systems. This chain is Superoxide dismutase [Mn], mitochondrial, found in Palinurus vulgaris (European spiny lobster).